Consider the following 215-residue polypeptide: Rac-like GTP-binding protein ARAC10 (215 aa).

15 to 22 (GDGAVGKT) contributes to the GTP binding site. The Effector region signature appears at 37-45 (YIPTVFDNF). Residues 62-66 (DTAGQ) and 120-123 (TKLD) contribute to the GTP site. Residues Cys202 and Cys208 are each lipidated (S-palmitoyl cysteine).

This sequence belongs to the small GTPase superfamily. Rho family. As to quaternary structure, component of the active ARAC10-IRC5-KIN13A complex. Interacts with ICR5.

The protein resides in the membrane. It localises to the cytoplasm. The protein localises to the cytoskeleton. Functionally, involved in local disassembly of cortical microtubules when associated with ICR5 and KIN13A. This is Rac-like GTP-binding protein ARAC10 (ARAC10) from Arabidopsis thaliana (Mouse-ear cress).